Reading from the N-terminus, the 465-residue chain is Pancreatic triacylglycerol lipase (465 aa).

The signal sequence occupies residues 1 to 16; it reads MLLVWSLALLLGAVAG. Intrachain disulfides connect Cys-20-Cys-26 and Cys-107-Cys-118. Ser-169 functions as the Nucleophile in the catalytic mechanism. Asp-193 functions as the Charge relay system in the catalytic mechanism. Residues Glu-204, Arg-207, Asp-209, and Asp-212 each coordinate Ca(2+). A disulfide bridge links Cys-254 with Cys-278. His-280 serves as the catalytic Charge relay system. Intrachain disulfides connect Cys-302–Cys-313, Cys-316–Cys-321, and Cys-449–Cys-465. One can recognise a PLAT domain in the interval 355–465; it reads WRYKVSVTLS…EDVLLTLNAC (111 aa).

Belongs to the AB hydrolase superfamily. Lipase family. Forms a 1:1 stoichiometric complex with (pro)colipase/CLPS. In terms of tissue distribution, expressed in many tissues with highest expression in liver. During hibernation there is a significant increases in expression in heart, white adipose tissue (WAT), and testis; but not in pancreas.

Its subcellular location is the secreted. The enzyme catalyses a triacylglycerol + H2O = a diacylglycerol + a fatty acid + H(+). It carries out the reaction 1,2,3-tributanoylglycerol + H2O = dibutanoylglycerol + butanoate + H(+). The catalysed reaction is 1,2,3-tri-(9Z-octadecenoyl)-glycerol + H2O = di-(9Z)-octadecenoylglycerol + (9Z)-octadecenoate + H(+). It catalyses the reaction all-trans-retinyl hexadecanoate + H2O = all-trans-retinol + hexadecanoate + H(+). The enzyme catalyses 1,2-di-(9Z-octadecenoyl)-glycerol + H2O = (9Z-octadecenoyl)-glycerol + (9Z)-octadecenoate + H(+). Inhibited by bile salts, is reactivated by (pro)colipase/CLPS. Its function is as follows. Plays an important role in fat metabolism. It preferentially splits the esters of long-chain fatty acids at positions 1 and 3, producing mainly 2-monoacylglycerol and free fatty acids, and shows considerably higher activity against insoluble emulsified substrates than against soluble ones. Plays a role in hibernation as a key enzyme that shows high activity at low temperatures. When expressed in the hibernating heart it liberates fatty acids from triglycerides at temperatures as low as 0 degrees Celsius. This Ictidomys tridecemlineatus (Thirteen-lined ground squirrel) protein is Pancreatic triacylglycerol lipase (PNLIP).